A 206-amino-acid polypeptide reads, in one-letter code: MARGKFITFEGIDGAGKTTHLQWFCDRLQERLGPAGRHVVVTREPGGTRLGETLREILLNQPMDLETEALLMFAGRREHLALVIEPALARGDWVVSDRFTDATFAYQGGGRGLPRDKLEALERWVQGGFQPDLTVLFDVPPQIASARRGAVRMPDKFESESDAFFARTRAEYLRRAQEAPHRFVIVDSSEPIAQIRKQLEGVLAAL.

11–18 (GIDGAGKT) contacts ATP.

Belongs to the thymidylate kinase family.

The enzyme catalyses dTMP + ATP = dTDP + ADP. In terms of biological role, phosphorylation of dTMP to form dTDP in both de novo and salvage pathways of dTTP synthesis. This Burkholderia thailandensis (strain ATCC 700388 / DSM 13276 / CCUG 48851 / CIP 106301 / E264) protein is Thymidylate kinase.